A 2620-amino-acid chain; its full sequence is Highly reducing polyketide synthase tazB (2620 aa).

The tract at residues 1-22 is disordered; sequence MPFLNGNTTHHEAHSAEPDHGN. Residues 1–416 enclose the Ketosynthase family 3 (KS3) domain; the sequence is MPFLNGNTTH…GTNAHCILDD (416 aa). Basic and acidic residues predominate over residues 9 to 22; the sequence is THHEAHSAEPDHGN. Active-site for beta-ketoacyl synthase activity residues include C166, H301, and H340. A disordered region spans residues 460–481; sequence GFNKFDEPRGSDSAGSNANGSH. Residues 470 to 481 show a composition bias toward low complexity; it reads SDSAGSNANGSH. The malonyl-CoA:ACP transacylase (MAT) domain stretch occupies residues 601–923; it reads VFTGQGAQYA…PYLATLSRKD (323 aa). Residues 993–1128 form an N-terminal hotdog fold region; the sequence is HDLFGAPVPD…GEVSPDLKKS (136 aa). Residues 993–1313 are dehydratase (DH) domain; that stretch reads HDLFGAPVPD…LAGIRLSPFK (321 aa). One can recognise a PKS/mFAS DH domain in the interval 993–1318; it reads HDLFGAPVPD…LSPFKPESSE (326 aa). H1025 serves as the catalytic Proton acceptor; for dehydratase activity. The segment at 1157-1318 is C-terminal hotdog fold; that stretch reads TAPVDFTPVY…LSPFKPESSE (162 aa). The active-site Proton donor; for dehydratase activity is D1225. A methyltransferase (CMet) domain region spans residues 1379–1680; sequence GLRESREMKD…VDFEASSSIY (302 aa). The tract at residues 1910-2227 is enoyl reductase (ER) domain; sequence GIDSLTWVTD…TGKSIGKVTL (318 aa). Residues 2251–2425 are ketoreductase (KR) domain; the sequence is SFILAGGLGG…HGASVNLGAV (175 aa). One can recognise a Carrier domain in the interval 2539–2620; the sequence is EAARIIHKAL…VSLSSFTKFR (82 aa). S2576 carries the post-translational modification O-(pantetheine 4'-phosphoryl)serine.

It functions in the pathway secondary metabolite biosynthesis. Highly reducing polyketide synthase; part of the gene cluster that mediates the biosynthesis of azaterrilone A and other azaphilones, a class of fungal metabolites characterized by a highly oxygenated pyrano-quinone bicyclic core and exhibiting a broad range of bioactivities. The first step of the pathway begins with the non-reducing polyketide synthase tazA that assembles one acetyl-CoA starter unit, five malonyl-CoA units, and catalyzes a series of Claisen condensations, methylation, PT-mediated cyclization, and finally releases the first hexaketide precursor through the R-domain. The tazA product then undergoes reduction on its terminal ketone and the following pyran-ring formation by yet undetermined enzyme(s). Dehydration and enoyl reduction, possibly involving the trans-enoyl reductase tazE leads to the next intermediate. TazD is predicted as an acetyltransferase and might catalyze the acetylation steps leading to the synthesis of azaterrilone A. Azaterrilone A is not the final product of the taz pathway and both the highly reducing polyketide synthase tazB and the dual enzyme tazHJ catalyze late steps of the pathway, leading to the production of the 2 final stereoisomers that contain additional polyketide modification whose structures have still to be determined. In Aspergillus terreus (strain NIH 2624 / FGSC A1156), this protein is Highly reducing polyketide synthase tazB.